The chain runs to 245 residues: Probable phosphatase YcdX (245 aa).

Zn(2+)-binding residues include His7, His9, His15, His40, Glu73, His101, His131, Asp192, and His194.

It belongs to the PHP family. As to quaternary structure, homotrimer. Zn(2+) serves as cofactor.

This chain is Probable phosphatase YcdX, found in Escherichia coli O139:H28 (strain E24377A / ETEC).